A 447-amino-acid polypeptide reads, in one-letter code: Argininosuccinate synthase (447 aa).

Residues 17-25 and A43 each bind ATP; that span reads AFSGGLDTS. Y99 is an L-citrulline binding site. ATP-binding residues include G129 and T131. L-aspartate-binding residues include T131, N135, and D136. N135 contributes to the L-citrulline binding site. D136 is a binding site for ATP. Residues R139 and S192 each coordinate L-citrulline. ATP is bound at residue D194. 3 residues coordinate L-citrulline: T201, E203, and E280.

This sequence belongs to the argininosuccinate synthase family. Type 2 subfamily. Homotetramer.

The protein resides in the cytoplasm. It carries out the reaction L-citrulline + L-aspartate + ATP = 2-(N(omega)-L-arginino)succinate + AMP + diphosphate + H(+). The protein operates within amino-acid biosynthesis; L-arginine biosynthesis; L-arginine from L-ornithine and carbamoyl phosphate: step 2/3. This chain is Argininosuccinate synthase, found in Salmonella dublin (strain CT_02021853).